The chain runs to 400 residues: MSERVVLAYSGGLDTSVAISWIGKETGAEVVAVAIDLGQGGEDMNVVRQRALDCGAVESIVIDARDEFAEQYCLPTIQANALYMGQYPLVSAISRPLIVKHLVEAAKFHGADTVAHGCTGKGNDQVRFEVGIGALAPDLNVIAPVRDYAWTREKAIAFAEENKLPINVTKKSPFSIDQNVWGRAVETGFLEDLWNAPTKDVYDYTADPTVNFEAPDELIITFDKGVPVAIDGRPVSVLEAIVELNHRAGRQGVGRLDMVEDRLVGIKSREIYEAPGAITLITAHQALEHVTIERELGRYKRQVEQRWGELAYDGLWFSPLKRALDAFVQDTQQHVSGDIRMVLHGGSAVVNGRRSEQSLYDFNLATYDEGDTFDQSLAKGFVQIHGLSSKVAARRDLNQK.

8 to 16 is an ATP binding site; sequence AYSGGLDTS. An L-citrulline-binding site is contributed by tyrosine 87. Position 117 (glycine 117) interacts with ATP. Threonine 119, asparagine 123, and aspartate 124 together coordinate L-aspartate. Asparagine 123 is an L-citrulline binding site. Positions 127, 175, 260, and 272 each coordinate L-citrulline.

This sequence belongs to the argininosuccinate synthase family. Type 1 subfamily. As to quaternary structure, homotetramer.

It localises to the cytoplasm. It carries out the reaction L-citrulline + L-aspartate + ATP = 2-(N(omega)-L-arginino)succinate + AMP + diphosphate + H(+). The protein operates within amino-acid biosynthesis; L-arginine biosynthesis; L-arginine from L-ornithine and carbamoyl phosphate: step 2/3. The polypeptide is Argininosuccinate synthase (Nocardia farcinica (strain IFM 10152)).